Consider the following 874-residue polypeptide: Alanine--tRNA ligase (874 aa).

4 residues coordinate Zn(2+): H564, H568, C665, and H669.

It belongs to the class-II aminoacyl-tRNA synthetase family. Zn(2+) serves as cofactor.

The protein resides in the cytoplasm. It carries out the reaction tRNA(Ala) + L-alanine + ATP = L-alanyl-tRNA(Ala) + AMP + diphosphate. Functionally, catalyzes the attachment of alanine to tRNA(Ala) in a two-step reaction: alanine is first activated by ATP to form Ala-AMP and then transferred to the acceptor end of tRNA(Ala). Also edits incorrectly charged Ser-tRNA(Ala) and Gly-tRNA(Ala) via its editing domain. The chain is Alanine--tRNA ligase from Burkholderia pseudomallei (strain 1106a).